We begin with the raw amino-acid sequence, 105 residues long: MIPGEIQVAAGDIELNSGRETVSVSVANHGDRPVQVGSHYHFYEVNDALVFDRAPTLGFRLDIPAGTAVRFEPGQARTVQLVAYAGKREVYGFQGKVMGALEGRA.

It belongs to the urease beta subunit family. In terms of assembly, heterotrimer of UreA (gamma), UreB (beta) and UreC (alpha) subunits. Three heterotrimers associate to form the active enzyme.

The protein resides in the cytoplasm. It catalyses the reaction urea + 2 H2O + H(+) = hydrogencarbonate + 2 NH4(+). It functions in the pathway nitrogen metabolism; urea degradation; CO(2) and NH(3) from urea (urease route): step 1/1. This chain is Urease subunit beta, found in Pseudomonas putida (strain ATCC 47054 / DSM 6125 / CFBP 8728 / NCIMB 11950 / KT2440).